Here is a 419-residue protein sequence, read N- to C-terminus: Keratin, type I cytoskeletal 47 kDa (419 aa).

Residues Met-1–Asn-81 are head. Positions Asp-82–Trp-117 are coil 1A. One can recognise an IF rod domain in the interval Asp-82–Leu-397. The tract at residues Tyr-118 to Ile-139 is linker 1. The segment at Ile-140 to Ala-231 is coil 1B. Residues Lys-232–Ile-254 are linker 12. The segment at Leu-255–Glu-393 is coil 2. The tail stretch occupies residues Phe-394–Asp-419.

This sequence belongs to the intermediate filament family. As to quaternary structure, heterotetramer of two type I and two type II keratins.

This Xenopus laevis (African clawed frog) protein is Keratin, type I cytoskeletal 47 kDa (xk81b2).